The sequence spans 84 residues: U-actitoxin-Avd8e (84 aa).

An N-terminal signal peptide occupies residues 1 to 22 (MASARTLVLLLIGAVLMCQVSA). A propeptide spanning residues 23-41 (DSELLNEILAAHMEEDMPE) is cleaved from the precursor. Residues 44-84 (CIDRYRSNICGSVIRPLDCTRRKSRMGRFARTNCKKLCGFC) form the ShKT domain. Intrachain disulfides connect C44-C84, C53-C77, and C62-C81.

This sequence belongs to the sea anemone 8 toxin family.

Its subcellular location is the secreted. It is found in the nematocyst. The sequence is that of U-actitoxin-Avd8e from Anemonia viridis (Snakelocks anemone).